We begin with the raw amino-acid sequence, 340 residues long: Phenylalanine--tRNA ligase alpha subunit (340 aa).

Glu254 contributes to the Mg(2+) binding site.

This sequence belongs to the class-II aminoacyl-tRNA synthetase family. Phe-tRNA synthetase alpha subunit type 1 subfamily. Tetramer of two alpha and two beta subunits. The cofactor is Mg(2+).

It is found in the cytoplasm. It carries out the reaction tRNA(Phe) + L-phenylalanine + ATP = L-phenylalanyl-tRNA(Phe) + AMP + diphosphate + H(+). This Caldicellulosiruptor bescii (strain ATCC BAA-1888 / DSM 6725 / KCTC 15123 / Z-1320) (Anaerocellum thermophilum) protein is Phenylalanine--tRNA ligase alpha subunit.